Consider the following 272-residue polypeptide: S-adenosylmethionine decarboxylase proenzyme (272 aa).

The active-site Schiff-base intermediate with substrate; via pyruvic acid is serine 122. Position 122 is a pyruvic acid (Ser); by autocatalysis (serine 122). Histidine 127 serves as the catalytic Proton acceptor; for processing activity. Cysteine 150 serves as the catalytic Proton donor; for catalytic activity.

Belongs to the prokaryotic AdoMetDC family. Type 2 subfamily. In terms of assembly, heterooctamer of four alpha and four beta chains arranged as a tetramer of alpha/beta heterodimers. Requires pyruvate as cofactor. Is synthesized initially as an inactive proenzyme. Formation of the active enzyme involves a self-maturation process in which the active site pyruvoyl group is generated from an internal serine residue via an autocatalytic post-translational modification. Two non-identical subunits are generated from the proenzyme in this reaction, and the pyruvate is formed at the N-terminus of the alpha chain, which is derived from the carboxyl end of the proenzyme. The post-translation cleavage follows an unusual pathway, termed non-hydrolytic serinolysis, in which the side chain hydroxyl group of the serine supplies its oxygen atom to form the C-terminus of the beta chain, while the remainder of the serine residue undergoes an oxidative deamination to produce ammonia and the pyruvoyl group blocking the N-terminus of the alpha chain.

It catalyses the reaction S-adenosyl-L-methionine + H(+) = S-adenosyl 3-(methylsulfanyl)propylamine + CO2. Its pathway is amine and polyamine biosynthesis; S-adenosylmethioninamine biosynthesis; S-adenosylmethioninamine from S-adenosyl-L-methionine: step 1/1. Its function is as follows. Catalyzes the decarboxylation of S-adenosylmethionine to S-adenosylmethioninamine (dcAdoMet), the propylamine donor required for the synthesis of the polyamines spermine and spermidine from the diamine putrescine. The sequence is that of S-adenosylmethionine decarboxylase proenzyme from Clostridium botulinum (strain Eklund 17B / Type B).